Reading from the N-terminus, the 380-residue chain is Putative glutamate--cysteine ligase 2-2 (380 aa).

This sequence belongs to the glutamate--cysteine ligase type 2 family. YbdK subfamily.

It catalyses the reaction L-cysteine + L-glutamate + ATP = gamma-L-glutamyl-L-cysteine + ADP + phosphate + H(+). Functionally, ATP-dependent carboxylate-amine ligase which exhibits weak glutamate--cysteine ligase activity. This Nocardia farcinica (strain IFM 10152) protein is Putative glutamate--cysteine ligase 2-2.